Reading from the N-terminus, the 109-residue chain is Large ribosomal subunit protein uL22 (109 aa).

The protein belongs to the universal ribosomal protein uL22 family. In terms of assembly, part of the 50S ribosomal subunit.

Its function is as follows. This protein binds specifically to 23S rRNA; its binding is stimulated by other ribosomal proteins, e.g. L4, L17, and L20. It is important during the early stages of 50S assembly. It makes multiple contacts with different domains of the 23S rRNA in the assembled 50S subunit and ribosome. In terms of biological role, the globular domain of the protein is located near the polypeptide exit tunnel on the outside of the subunit, while an extended beta-hairpin is found that lines the wall of the exit tunnel in the center of the 70S ribosome. This chain is Large ribosomal subunit protein uL22, found in Polynucleobacter asymbioticus (strain DSM 18221 / CIP 109841 / QLW-P1DMWA-1) (Polynucleobacter necessarius subsp. asymbioticus).